The chain runs to 3843 residues: NBPF family member NBPF19 (3843 aa).

A coiled-coil region spans residues 70–130 (MLRNERQFKE…RSLNEHLQAL (61 aa)). Olduvai domains lie at 165 to 257 (ENDN…HIIP), 258 to 329 (ENES…VDIG), 330 to 421 (RHRW…PSCP), 424 to 479 (SREL…LDVD), 480 to 572 (RIKK…RSKK), 573 to 665 (ERRR…PSCP), 668 to 723 (SREL…LDVD), 724 to 816 (RIKK…RSKK), 817 to 909 (ERRR…PSCP), 912 to 967 (SREL…LDVD), 968 to 1060 (RIKK…RSKK), 1061 to 1153 (ERRR…PSCP), 1156 to 1211 (SREL…LDVD), 1212 to 1304 (RIKK…RSKK), 1305 to 1397 (ERRR…PSCP), 1400 to 1455 (SREL…LDVD), 1456 to 1548 (RIKK…RSKK), 1549 to 1641 (ERRR…PSCP), 1644 to 1699 (SREL…LDVD), 1700 to 1792 (RIKK…RSKK), 1793 to 1885 (ERRR…PSCP), 1888 to 1943 (SREL…LDVD), 1944 to 2036 (RIKK…RSKK), 2037 to 2129 (ERRR…PSCP), 2132 to 2187 (SREL…LDVD), 2188 to 2280 (RIKK…RSKK), 2281 to 2373 (ERRR…PSCP), 2376 to 2431 (SREL…LDVD), 2432 to 2524 (RIKK…RSKK), 2525 to 2617 (ERRR…PSCP), 2620 to 2675 (SREL…LDVD), 2676 to 2768 (RIKK…RSKK), 2769 to 2861 (ERRR…PSCP), 2864 to 2919 (SREL…LDVD), 2920 to 3012 (RIKK…RSKK), 3013 to 3105 (ERRR…PSCP), 3108 to 3163 (SREL…LDVD), 3164 to 3256 (RIKK…RSKK), 3257 to 3349 (ERRR…PSCP), 3352 to 3407 (SREL…LDVD), 3408 to 3500 (RIKK…RSKK), 3501 to 3593 (ERRR…PSCP), 3596 to 3651 (SREL…LDVD), 3652 to 3744 (RIKK…RSKK), and 3745 to 3843 (ERRR…IFPQ). Disordered regions lie at residues 180-203 (EKVQ…PEDS) and 249-295 (WEDA…EGYS). Composition is skewed to acidic residues over residues 259–268 (NESDDEEEEE) and 279–291 (ESEE…ESWD). The interval 559-597 (KGKGKKRRGRRSKKERRRGRKEGEEDQNPPCPRLSRELL) is disordered. A compositionally biased stretch (basic residues) spans 560–578 (GKGKKRRGRRSKKERRRGR). The segment at 803–841 (KGKGKKRRGRRSKKERRRGRKEGEEDQNPPCPRLSRELL) is disordered. The segment covering 804 to 822 (GKGKKRRGRRSKKERRRGR) has biased composition (basic residues). Positions 1047–1085 (KGKGKKRRGRRSKKERRRGRKEGEEDQNPPCPRLSRELL) are disordered. Residues 1048 to 1066 (GKGKKRRGRRSKKERRRGR) show a composition bias toward basic residues. A disordered region spans residues 1291-1329 (KGKGKKRRGRRSKKERRRGRKEGEEDQNPPCPRLSRELL). Positions 1292 to 1310 (GKGKKRRGRRSKKERRRGR) are enriched in basic residues. The tract at residues 1535-1573 (KGKGKKRRGRRSKKERRRGRKEGEEDQNPPCPRLSRELL) is disordered. The span at 1536–1554 (GKGKKRRGRRSKKERRRGR) shows a compositional bias: basic residues. Residues 1779-1817 (KGKGKKRRGRRSKKERRRGRKEGEEDQNPPCPRLSRELL) form a disordered region. Positions 1780–1798 (GKGKKRRGRRSKKERRRGR) are enriched in basic residues. The segment at 2023–2061 (KGKGKKRRGRRSKKERRRGRKEGEEDQNPPCPRLSRELL) is disordered. Residues 2024-2042 (GKGKKRRGRRSKKERRRGR) show a composition bias toward basic residues. The interval 2267–2305 (KGKGKKRRGRRSKKERRRGRKEGEEDQNPPCPRLSRELL) is disordered. The span at 2268–2286 (GKGKKRRGRRSKKERRRGR) shows a compositional bias: basic residues. The tract at residues 2511–2549 (KGKGKKRRGRRSKKERRRGRKEGEEDQNPPCPRLSRELL) is disordered. The segment covering 2512–2530 (GKGKKRRGRRSKKERRRGR) has biased composition (basic residues). The tract at residues 2755–2793 (KGKGKKRRGRRSKKERRRGRKEGEEDQNPPCPRLSRELL) is disordered. The segment covering 2756 to 2774 (GKGKKRRGRRSKKERRRGR) has biased composition (basic residues). Residues 2999-3037 (KGKGKKRRGRRSKKERRRGRKEGEEDQNPPCPRLSRELL) form a disordered region. Over residues 3000-3018 (GKGKKRRGRRSKKERRRGR) the composition is skewed to basic residues. Residues 3243-3281 (KGKGKKRRGRRSKKERRRGRKEGEEDQNPPCPRLSRELL) are disordered. The span at 3244–3262 (GKGKKRRGRRSKKERRRGR) shows a compositional bias: basic residues. Residues 3487–3525 (KGKGKKRRGRRSKKERRRGRKEGEEDQNPPCPRLSRELL) are disordered. Positions 3488-3506 (GKGKKRRGRRSKKERRRGR) are enriched in basic residues. Residues 3731–3764 (KGKGKKRRGRRSKKERRRGRKEGEEDQNPPCPRL) are disordered. The span at 3732 to 3750 (GKGKKRRGRRSKKERRRGR) shows a compositional bias: basic residues.

The protein belongs to the NBPF family.

The protein localises to the cytoplasm. This chain is NBPF family member NBPF19, found in Homo sapiens (Human).